Consider the following 815-residue polypeptide: MDVQYRPDQIEAQAQQYWDDNQSFKVTEDASKEKFYCLSMFPYPSGRLHMGHVRNYSIGDVVSRYQRMLGKNVLQPMGWDAFGLPAENAAIKNKVAPAKWTFENIDYMRGQLQRLGFGYDWGRELATCTPEYYRWEQWFFTKLYEKGLVYRKMSTVNWDPVDQTVLANEQVIDGRGWRSGALVEQKEIPQWFIKITDYADELLNDLDQLDGWPEQVKTMQRNWIGRSEGVELDFPIEGEESLRVYTTRPDTLMGVSYVAVAAGHPLAQKAAAANHEVADFIKECQNTKTAEADMATMEKKGIYTGLTATHPISGEAVPVWIANFVLMGYGTGAVMAVPAHDQRDFEFAQKYGLPINQVIEPANGEPIDLALEAFTGKGTLIHSGEFDGLSSAEAFNAIANWLSERSLGEKKVNYRLRDWGVSRQRYWGTPIPMVETEDGTLHPTPEDQLPVALPTDVEMDGVTSPIKADPEWAKTTFNGQPALRETDTFDTFMESSWYYARYCSPQSDTAMLDPAATNYWLPVDQYIGGIEHAILHLLYSRFFHKLLRDTGLVNCDEPFKQLLCQGMVLKDGAKMSKSKGNTVDPQQMIEEYGADTVRLFMMFAAPPEQSLEWNDAGVEGAFRFIKRLWRLVAEHVEAGNTGTLDVNALDDAGKALRRKTHETIQKVSDDYGRRNTFNTAIAAVMELINEVSKFDAATDNALAVKQEALEAAVLLLAPIIPHAGHSLWQALGHDEAVIDASWPSVDESALVKDSIELVVQVNGKVRAKLNVPANADKASVESLAMDEPNVKKFTEGKTVRKVIVVPGKLVNIVAN.

Residues 42-52 (PYPSGRLHMGH) carry the 'HIGH' region motif. The 'KMSKS' region motif lies at 574-578 (KMSKS). K577 is an ATP binding site.

It belongs to the class-I aminoacyl-tRNA synthetase family.

It localises to the cytoplasm. It catalyses the reaction tRNA(Leu) + L-leucine + ATP = L-leucyl-tRNA(Leu) + AMP + diphosphate. The sequence is that of Leucine--tRNA ligase from Alcanivorax borkumensis (strain ATCC 700651 / DSM 11573 / NCIMB 13689 / SK2).